The following is a 418-amino-acid chain: Phosphoglycerate kinase (418 aa).

Residues Val-24, Asp-25, Phe-26, Asn-27, Arg-40, Ser-63, His-64, Gly-66, Arg-67, Leu-122, Arg-123, His-169, and Arg-170 each contribute to the (2R)-3-phosphoglycerate site. Gly-213 is an ADP binding site. A CDP-binding site is contributed by Gly-213. Positions 214 and 215 each coordinate AMP. ATP is bound at residue Ala-214. Residue Ala-214 participates in Mg(2+) binding. Residues Ala-217 and Asp-218 each contribute to the Mg(2+) site. Asp-218 provides a ligand contact to CDP. Lys-219 contacts AMP. ATP is bound at residue Lys-219. Gly-237 is an ADP binding site. Gly-237 contributes to the CDP binding site. The AMP site is built by Gly-238 and Gly-312. Positions 238 and 312 each coordinate ATP. Residues Gly-337 and Phe-342 each contribute to the CDP site. Phe-342 provides a ligand contact to ADP. Glu-343 lines the AMP pocket. ATP is bound by residues Glu-343, Asp-374, and Thr-375. Asp-374 is a Mg(2+) binding site.

Belongs to the phosphoglycerate kinase family. In terms of assembly, monomer. It depends on Mg(2+) as a cofactor.

The catalysed reaction is (2R)-3-phosphoglycerate + ATP = (2R)-3-phospho-glyceroyl phosphate + ADP. It functions in the pathway carbohydrate degradation; glycolysis; pyruvate from D-glyceraldehyde 3-phosphate: step 2/5. This Euplotes crassus protein is Phosphoglycerate kinase (PGK).